Consider the following 371-residue polypeptide: Cathepsin W (371 aa).

Residues 1-21 (MTLTAHLSYFLVLLLAGQGLS) form the signal peptide. Positions 22–125 (DSLLTKDAGP…KVESNTWGES (104 aa)) are excised as a propeptide. Residues Asn48 and Asn112 are each glycosylated (N-linked (GlcNAc...) asparagine). Disulfide bonds link Cys148/Cys189, Cys182/Cys224, and Cys282/Cys347. Cys151 is an active-site residue. Residue Asn203 is glycosylated (N-linked (GlcNAc...) asparagine). Residues His289 and Asn326 contribute to the active site. A glycan (N-linked (GlcNAc...) asparagine) is linked at Asn344.

Belongs to the peptidase C1 family.

The protein resides in the endoplasmic reticulum. Its function is as follows. May have a specific function in the mechanism or regulation of T-cell cytolytic activity. The polypeptide is Cathepsin W (Ctsw) (Mus musculus (Mouse)).